The primary structure comprises 401 residues: Deoxyhypusine synthase-like protein (401 aa).

The protein belongs to the deoxyhypusine synthase family.

This chain is Deoxyhypusine synthase-like protein, found in Thermosynechococcus vestitus (strain NIES-2133 / IAM M-273 / BP-1).